Consider the following 412-residue polypeptide: Chorismate synthase (412 aa).

Residues arginine 40 and arginine 46 each coordinate NADP(+). Residues 134 to 136 (RAS), 255 to 256 (QA), glycine 299, 314 to 318 (KPIAT), and arginine 340 each bind FMN.

It belongs to the chorismate synthase family. In terms of assembly, homotetramer. FMNH2 serves as cofactor.

It carries out the reaction 5-O-(1-carboxyvinyl)-3-phosphoshikimate = chorismate + phosphate. Its pathway is metabolic intermediate biosynthesis; chorismate biosynthesis; chorismate from D-erythrose 4-phosphate and phosphoenolpyruvate: step 7/7. Its function is as follows. Catalyzes the anti-1,4-elimination of the C-3 phosphate and the C-6 proR hydrogen from 5-enolpyruvylshikimate-3-phosphate (EPSP) to yield chorismate, which is the branch point compound that serves as the starting substrate for the three terminal pathways of aromatic amino acid biosynthesis. This reaction introduces a second double bond into the aromatic ring system. The sequence is that of Chorismate synthase from Clavibacter michiganensis subsp. michiganensis (strain NCPPB 382).